The chain runs to 185 residues: NEDD8-conjugating enzyme UBE2F (185 aa).

M1 carries the post-translational modification N-acetylmethionine. Residues 1–29 form an interaction with UBA3 region; that stretch reads MLTLASKLKRDDGLKGSRASATASDSTRR. Residues 32 to 185 enclose the UBC core domain; that stretch reads VRDRLLVKEV…VEDYIKRYAR (154 aa). The Glycyl thioester intermediate role is filled by C116.

It belongs to the ubiquitin-conjugating enzyme family. UBE2F subfamily. In terms of assembly, interacts with UBA3 and RBX2. Interacts (N-terminally acetylated form) with (via DCUN1 domain) DCUN1D1, DCUN1D2, DCUN1D3, DCUN1D4 and DCUN1D5. Post-translationally, the acetylation of Met-1 increases affinity for DCUN1D3 by about 2 orders of magnitude and is crucial for NEDD8 transfer to cullins.

The catalysed reaction is [E1 NEDD8-activating enzyme]-S-[NEDD8 protein]-yl-L-cysteine + [E2 NEDD8-conjugating enzyme]-L-cysteine = [E1 NEDD8-activating enzyme]-L-cysteine + [E2 NEDD8-conjugating enzyme]-S-[NEDD8-protein]-yl-L-cysteine.. The protein operates within protein modification; protein neddylation. Functionally, accepts the ubiquitin-like protein NEDD8 from the UBA3-NAE1 E1 complex and catalyzes its covalent attachment to other proteins. Together with the E3 ubiquitin ligase RNF7/RBX2, specifically neddylates cullin-5 (CUL5). Does not neddylate CUL1, CUL2, CUL3, CUL4A or CUL4B. Mediates neddylation of the CUL9-RBX1 complex. The protein is NEDD8-conjugating enzyme UBE2F (UBE2F) of Bos taurus (Bovine).